Reading from the N-terminus, the 83-residue chain is Small ribosomal subunit protein eS21 (83 aa).

It belongs to the eukaryotic ribosomal protein eS21 family. As to quaternary structure, component of the 40S small ribosomal subunit.

It localises to the cytoplasm. It is found in the cytosol. The protein resides in the rough endoplasmic reticulum. This is Small ribosomal subunit protein eS21 (RpS21) from Agriotes lineatus (Lined click beetle).